Here is a 103-residue protein sequence, read N- to C-terminus: MYAVFQSGGKQHRVSEGQTVRLEKLDIATGEAVEFAEVLMIANGEEVKIGVPFVDGGVIKAEVVAHGRGEKVKIVKFRRRKHYRKQQGHRQWFTDVKITGISA.

Belongs to the bacterial ribosomal protein bL21 family. As to quaternary structure, part of the 50S ribosomal subunit. Contacts protein L20.

Its function is as follows. This protein binds to 23S rRNA in the presence of protein L20. In Enterobacter sp. (strain 638), this protein is Large ribosomal subunit protein bL21.